A 120-amino-acid chain; its full sequence is Small ribosomal subunit protein uS13 (120 aa).

The disordered stretch occupies residues 96 to 120 (PCRGQRTRTNARTRKGPRKAIAGKK).

It belongs to the universal ribosomal protein uS13 family. As to quaternary structure, part of the 30S ribosomal subunit. Forms a loose heterodimer with protein S19. Forms two bridges to the 50S subunit in the 70S ribosome.

Its function is as follows. Located at the top of the head of the 30S subunit, it contacts several helices of the 16S rRNA. In the 70S ribosome it contacts the 23S rRNA (bridge B1a) and protein L5 of the 50S subunit (bridge B1b), connecting the 2 subunits; these bridges are implicated in subunit movement. Contacts the tRNAs in the A and P-sites. The protein is Small ribosomal subunit protein uS13 of Dechloromonas aromatica (strain RCB).